The sequence spans 179 residues: Dual-action ribosomal maturation protein DarP (179 aa).

The protein belongs to the DarP family.

It localises to the cytoplasm. Its function is as follows. Member of a network of 50S ribosomal subunit biogenesis factors which assembles along the 30S-50S interface, preventing incorrect 23S rRNA structures from forming. Promotes peptidyl transferase center (PTC) maturation. The sequence is that of Dual-action ribosomal maturation protein DarP from Aliivibrio fischeri (strain ATCC 700601 / ES114) (Vibrio fischeri).